Consider the following 563-residue polypeptide: Type 2 DNA topoisomerase 6 subunit B (563 aa).

ATP-binding positions include Asn-46, Asp-78, 99–100 (TK), 109–116 (GQQGIGIS), and Lys-471.

Belongs to the TOP6B family. Homodimer. Heterotetramer of two Top6A and two Top6B chains.

The catalysed reaction is ATP-dependent breakage, passage and rejoining of double-stranded DNA.. Its function is as follows. Relaxes both positive and negative superturns and exhibits a strong decatenase activity. The sequence is that of Type 2 DNA topoisomerase 6 subunit B from Thermococcus onnurineus (strain NA1).